The chain runs to 735 residues: E3 ubiquitin-protein ligase SH3RF2 (735 aa).

An RING-type zinc finger spans residues 12-53 (CPVCFEKLDVTAKVLPCQHTFCKPCLQRIFKAHKELRCPECR). SH3 domains follow at residues 125-184 (DGVP…VIKQ) and 187-252 (QPPP…PNLS). Disordered stretches follow at residues 260-301 (SKGH…GSGQ) and 335-373 (TSPS…STAM). Over residues 273–289 (LMSSPSRGKATNTSTLR) the composition is skewed to polar residues. Residues 373–466 (MVSVPSSQQH…RHPTVCTTWA (94 aa)) form an interaction with PAK4 region. The 62-residue stretch at 383–444 (LSTNMFVALH…PSDYVIPVFS (62 aa)) folds into the SH3 3 domain. Disordered stretches follow at residues 472 to 534 (VSSQ…PVQS), 612 to 637 (ETPI…KPEN), and 649 to 735 (VRFQ…FPSK). Polar residues predominate over residues 523-534 (RKNGSLQRPVQS). Over residues 617–627 (SEPPPKPPASA) the composition is skewed to pro residues. The tract at residues 647-652 (KTVRFQ) is interaction with PPP1CA. A Phosphoserine modification is found at Ser655. Polar residues predominate over residues 715 to 735 (FSKTTPPVSTASVSQTLFPSK).

The protein belongs to the SH3RF family. As to quaternary structure, interacts with FASLG and PPP1CA. Interacts with PAK4 and TNFRSF1A. Interacts with DLK1, MAP3K10, MAPK8IP1/JIP1, MAPK8IP2/JIP2 and MAPK8IP3/JIP3. Interacts with RAC1 (both active GTP- or inactive GDP-bound forms). Autoubiquitinated.

The protein resides in the nucleus. The catalysed reaction is S-ubiquitinyl-[E2 ubiquitin-conjugating enzyme]-L-cysteine + [acceptor protein]-L-lysine = [E2 ubiquitin-conjugating enzyme]-L-cysteine + N(6)-ubiquitinyl-[acceptor protein]-L-lysine.. The protein operates within protein modification; protein ubiquitination. Has E3 ubiquitin-protein ligase activity. Acts as an anti-apoptotic regulator of the JNK pathway by ubiquitinating and promoting the degradation of SH3RF1, a scaffold protein that is required for pro-apoptotic JNK activation. Facilitates TNF-alpha-mediated recruitment of adapter proteins TRADD and RIPK1 to TNFRSF1A and regulates PAK4 protein stability via inhibition of its ubiquitin-mediated proteasomal degradation. Inhibits PPP1CA phosphatase activity. This chain is E3 ubiquitin-protein ligase SH3RF2 (Sh3rf2), found in Rattus norvegicus (Rat).